The primary structure comprises 623 residues: MDDQNKNLILATGLSFLVIMVWFFLFPPPEAVTEGETTVATQQTAVAPSATPDAPTTAVPPDAELPETQRVVIDTPRLQGSISMLGGRLDDLSLKSYHETLDPQSQIVRLLSPVGQPNAYYALYGWTPAGALGYEDVPGANTTWTQVGSGALGVDQPVTLQWDNGKGLVFTRTISVDDHYMFSVAQTVENNSGQAVQLAPYGIVARHGKPLNLQNFFVLHEGVVGRADGKLTETKYDKVAELPQVAREGAQAEVIDAQQDGWIGFTDKYWMTTLIPQQGQPFTSVTKYVPGADIYQAETREQLVTVAPGATAEVSSRLFAGAKEWETIRAYQNEGATEPTEGAEPIPGFIDSIDWGWFFFLTKPIFTVLHWLNHMIGNMGLAIIALTFLLKALVLPLAYKSYVSMARMKELQPELEALRERAGDDKMLMQREMMRLYKEKQVNPAAGCLPILIQIPIFFSLYKVIFVTIELRHAPFFGWLKDLSAPDPSSIFNFFGLAPWAAPTPGTTMALIFIGALPILLGVSMWLQQKLNPAPGDKAQAMIFAWMPWVFMFMLGHFASGLVLYWIVNNLITFTQQYVIMRSHGHHPDIFGNIKASFSRKPAAQPAGKAANDGAAPAKKRKP.

5 helical membrane passes run 8 to 28 (LILA…LFPP), 379 to 399 (MGLA…PLAY), 449 to 469 (LPIL…FVTI), 507 to 527 (TTMA…SMWL), and 543 to 563 (IFAW…SGLV). Residues 601-617 (KPAAQPAGKAANDGAAP) show a composition bias toward low complexity. Residues 601-623 (KPAAQPAGKAANDGAAPAKKRKP) are disordered.

The protein belongs to the OXA1/ALB3/YidC family. Type 1 subfamily. Interacts with the Sec translocase complex via SecD. Specifically interacts with transmembrane segments of nascent integral membrane proteins during membrane integration.

It localises to the cell inner membrane. Functionally, required for the insertion and/or proper folding and/or complex formation of integral membrane proteins into the membrane. Involved in integration of membrane proteins that insert both dependently and independently of the Sec translocase complex, as well as at least some lipoproteins. Aids folding of multispanning membrane proteins. In Cereibacter sphaeroides (strain ATCC 17029 / ATH 2.4.9) (Rhodobacter sphaeroides), this protein is Membrane protein insertase YidC.